The following is a 590-amino-acid chain: Selenoprotein N (590 aa).

Positions 1–26 (MGRARPGQRGPPSPGPAAQPPAPPRR) are disordered. A signal peptide spans 1-43 (MGRARPGQRGPPSPGPAAQPPAPPRRRARSLALLGALLAAAAA). The segment covering 9 to 23 (RGPPSPGPAAQPPAP) has biased composition (pro residues). One can recognise an EF-hand domain in the interval 67–102 (TLGTDGLFLFSSLDTDGDMYISPEEFKPIAEKLTGS). Residue asparagine 126 is glycosylated (N-linked (GlcNAc...) asparagine). Residue selenocysteine 127 is a non-standard amino acid, selenocysteine. An N-linked (GlcNAc...) asparagine glycan is attached at asparagine 190. A non-standard amino acid (selenocysteine) is located at residue selenocysteine 462. Asparagine 483, asparagine 505, and asparagine 531 each carry an N-linked (GlcNAc...) asparagine glycan.

As to quaternary structure, interacts with RYR1, RYR2 and RYR3. Post-translationally, N-glycosylated. In terms of tissue distribution, isoform 1 and isoform 2 are expressed in skeletal muscle, brain, lung and placenta. Isoform 2 is also expressed in heart, diaphragm and stomach.

It is found in the endoplasmic reticulum membrane. Functionally, plays an important role in cell protection against oxidative stress and in the regulation of redox-related calcium homeostasis. Regulates the calcium level of the ER by protecting the calcium pump ATP2A2 against the oxidoreductase ERO1A-mediated oxidative damage. Within the ER, ERO1A activity increases the concentration of H(2)O(2), which attacks the luminal thiols in ATP2A2 and thus leads to cysteinyl sulfenic acid formation (-SOH) and SEPN1 reduces the SOH back to free thiol (-SH), thus restoring ATP2A2 activity. Acts as a modulator of ryanodine receptor (RyR) activity: protects RyR from oxidation due to increased oxidative stress, or directly controls the RyR redox state, regulating the RyR-mediated calcium mobilization required for normal muscle development and differentiation. Its function is as follows. Essential for muscle regeneration and satellite cell maintenance in skeletal muscle. The sequence is that of Selenoprotein N from Homo sapiens (Human).